We begin with the raw amino-acid sequence, 333 residues long: (2R)-3-sulfolactate dehydrogenase (NADP(+)) (333 aa).

The protein belongs to the LDH2/MDH2 oxidoreductase family.

It carries out the reaction (2R)-3-sulfolactate + NADP(+) = 3-sulfopyruvate + NADPH + H(+). Functionally, catalyzes the reduction of sulfopyruvate to (R)-sulfolactate. Together with SlcC, provides a racemase system that converts (2S)-3-sulfolactate to (2R)-3-sulfolactate, which is degraded further by (2R)-sulfolactate sulfo-lyase. This chain is (2R)-3-sulfolactate dehydrogenase (NADP(+)) (comC), found in Chromohalobacter salexigens (strain ATCC BAA-138 / DSM 3043 / CIP 106854 / NCIMB 13768 / 1H11).